Here is a 355-residue protein sequence, read N- to C-terminus: Alanine racemase (355 aa).

The active-site Proton acceptor; specific for D-alanine is Lys34. Lys34 carries the N6-(pyridoxal phosphate)lysine modification. Residue Arg133 coordinates substrate. The active-site Proton acceptor; specific for L-alanine is Tyr249. Residue Met297 coordinates substrate.

Belongs to the alanine racemase family. It depends on pyridoxal 5'-phosphate as a cofactor.

The catalysed reaction is L-alanine = D-alanine. It participates in amino-acid biosynthesis; D-alanine biosynthesis; D-alanine from L-alanine: step 1/1. Catalyzes the interconversion of L-alanine and D-alanine. May also act on other amino acids. This Rickettsia peacockii (strain Rustic) protein is Alanine racemase (alr).